Consider the following 531-residue polypeptide: 2-isopropylmalate synthase (531 aa).

Residues 8–284 (IIIFDTTLRD…LTNIDTKQIY (277 aa)) form the Pyruvate carboxyltransferase domain. 4 residues coordinate Mn(2+): Asp-17, His-208, His-210, and Asn-244. The segment at 408–531 (RVELVQVSCG…TQDKQTEVTA (124 aa)) is regulatory domain.

Belongs to the alpha-IPM synthase/homocitrate synthase family. LeuA type 1 subfamily. In terms of assembly, homodimer. The cofactor is Mn(2+).

It is found in the cytoplasm. It catalyses the reaction 3-methyl-2-oxobutanoate + acetyl-CoA + H2O = (2S)-2-isopropylmalate + CoA + H(+). The protein operates within amino-acid biosynthesis; L-leucine biosynthesis; L-leucine from 3-methyl-2-oxobutanoate: step 1/4. In terms of biological role, catalyzes the condensation of the acetyl group of acetyl-CoA with 3-methyl-2-oxobutanoate (2-ketoisovalerate) to form 3-carboxy-3-hydroxy-4-methylpentanoate (2-isopropylmalate). In Trichormus variabilis (strain ATCC 29413 / PCC 7937) (Anabaena variabilis), this protein is 2-isopropylmalate synthase.